We begin with the raw amino-acid sequence, 247 residues long: 5'-nucleotidase SurE (247 aa).

Aspartate 8, aspartate 9, serine 39, and asparagine 91 together coordinate a divalent metal cation.

This sequence belongs to the SurE nucleotidase family. The cofactor is a divalent metal cation.

It is found in the cytoplasm. It carries out the reaction a ribonucleoside 5'-phosphate + H2O = a ribonucleoside + phosphate. Nucleotidase that shows phosphatase activity on nucleoside 5'-monophosphates. In Ruthia magnifica subsp. Calyptogena magnifica, this protein is 5'-nucleotidase SurE.